The chain runs to 443 residues: Thymidine phosphorylase (443 aa).

This sequence belongs to the thymidine/pyrimidine-nucleoside phosphorylase family. As to quaternary structure, homodimer.

The enzyme catalyses thymidine + phosphate = 2-deoxy-alpha-D-ribose 1-phosphate + thymine. It functions in the pathway pyrimidine metabolism; dTMP biosynthesis via salvage pathway; dTMP from thymine: step 1/2. Functionally, the enzymes which catalyze the reversible phosphorolysis of pyrimidine nucleosides are involved in the degradation of these compounds and in their utilization as carbon and energy sources, or in the rescue of pyrimidine bases for nucleotide synthesis. The polypeptide is Thymidine phosphorylase (Shewanella baltica (strain OS195)).